A 739-amino-acid polypeptide reads, in one-letter code: Catalase-peroxidase 2 (739 aa).

The signal sequence occupies residues 1-26 (MKKTTIPTLSALTLAMSLAFGGAAIA). The segment at residues 105-227 (WHSAGVYRIF…MGATQMGLIY (123 aa)) is a cross-link (tryptophyl-tyrosyl-methioninium (Trp-Tyr) (with M-253)). His-106 serves as the catalytic Proton acceptor. Residues 227–253 (YVNPEGPNGVPDPLASAKEIRDTFGRM) constitute a cross-link (tryptophyl-tyrosyl-methioninium (Tyr-Met) (with W-105)). His-268 serves as a coordination point for heme b.

Belongs to the peroxidase family. Peroxidase/catalase subfamily. As to quaternary structure, homodimer or homotetramer. Heme b is required as a cofactor. Post-translationally, formation of the three residue Trp-Tyr-Met cross-link is important for the catalase, but not the peroxidase activity of the enzyme.

The enzyme catalyses H2O2 + AH2 = A + 2 H2O. It carries out the reaction 2 H2O2 = O2 + 2 H2O. Bifunctional enzyme with both catalase and broad-spectrum peroxidase activity. This is Catalase-peroxidase 2 from Shewanella sp. (strain MR-4).